Reading from the N-terminus, the 427-residue chain is Enolase (427 aa).

Glutamine 163 provides a ligand contact to (2R)-2-phosphoglycerate. Residue glutamate 205 is the Proton donor of the active site. Mg(2+) is bound by residues aspartate 242, glutamate 285, and aspartate 312. Positions 337, 366, 367, and 388 each coordinate (2R)-2-phosphoglycerate. Lysine 337 acts as the Proton acceptor in catalysis.

This sequence belongs to the enolase family. It depends on Mg(2+) as a cofactor.

It is found in the cytoplasm. The protein resides in the secreted. It localises to the cell surface. It carries out the reaction (2R)-2-phosphoglycerate = phosphoenolpyruvate + H2O. It participates in carbohydrate degradation; glycolysis; pyruvate from D-glyceraldehyde 3-phosphate: step 4/5. In terms of biological role, catalyzes the reversible conversion of 2-phosphoglycerate (2-PG) into phosphoenolpyruvate (PEP). It is essential for the degradation of carbohydrates via glycolysis. The polypeptide is Enolase (Rhodopseudomonas palustris (strain HaA2)).